Consider the following 67-residue polypeptide: DNA-directed RNA polymerase subunit omega (67 aa).

Belongs to the RNA polymerase subunit omega family. The RNAP catalytic core consists of 2 alpha, 1 beta, 1 beta' and 1 omega subunit. When a sigma factor is associated with the core the holoenzyme is formed, which can initiate transcription.

The catalysed reaction is RNA(n) + a ribonucleoside 5'-triphosphate = RNA(n+1) + diphosphate. Promotes RNA polymerase assembly. Latches the N- and C-terminal regions of the beta' subunit thereby facilitating its interaction with the beta and alpha subunits. The sequence is that of DNA-directed RNA polymerase subunit omega from Bordetella pertussis (strain Tohama I / ATCC BAA-589 / NCTC 13251).